A 598-amino-acid polypeptide reads, in one-letter code: Ecto-NOX disulfide-thiol exchanger 2 (598 aa).

An RRM domain is found at Lys-99–Ala-178. Coiled-coil stretches lie at residues Ile-264–Ile-299 and Arg-352–Asn-476.

Belongs to the ENOX family. Requires Cu cation as cofactor. Glycosylated.

It localises to the cell membrane. The protein resides in the secreted. It is found in the extracellular space. With respect to regulation, inhibited by the antitumor sulfonylurea LY181984, the vabilloid capsaicin, and retinoids. In terms of biological role, may be involved in cell growth. Probably acts as a terminal oxidase of plasma electron transport from cytosolic NAD(P)H via hydroquinones to acceptors at the cell surface. Hydroquinone oxidase activity alternates with a protein disulfide-thiol interchange/oxidoreductase activity which may control physical membrane displacements associated with vesicle budding or cell enlargement. The activities oscillate with a period length of 22 minutes and play a role in control of the ultradian cellular biological clock. The sequence is that of Ecto-NOX disulfide-thiol exchanger 2 (Enox2) from Mus musculus (Mouse).